A 490-amino-acid chain; its full sequence is Cobyric acid synthase (490 aa).

A GATase cobBQ-type domain is found at 252–428; the sequence is ARRVAVVRLP…WHGAFEGDAL (177 aa). Residue cysteine 333 is the Nucleophile of the active site. Histidine 420 is an active-site residue.

This sequence belongs to the CobB/CobQ family. CobQ subfamily.

It participates in cofactor biosynthesis; adenosylcobalamin biosynthesis. In terms of biological role, catalyzes amidations at positions B, D, E, and G on adenosylcobyrinic A,C-diamide. NH(2) groups are provided by glutamine, and one molecule of ATP is hydrogenolyzed for each amidation. This chain is Cobyric acid synthase, found in Mycolicibacterium vanbaalenii (strain DSM 7251 / JCM 13017 / BCRC 16820 / KCTC 9966 / NRRL B-24157 / PYR-1) (Mycobacterium vanbaalenii).